Reading from the N-terminus, the 492-residue chain is Cytoplasmic dynein 1 light intermediate chain 2 (492 aa).

61 to 68 (GEDGSGKT) is an ATP binding site. 3 disordered regions span residues 188–207 (EEGCQGSPQRRGPLTSGSDE), 370–423 (LAKQ…KNNA), and 437–492 (LSKK…ENEA). Phosphoserine occurs at positions 194, 383, and 391. The span at 370 to 383 (LAKQPATPTRTSES) shows a compositional bias: polar residues. At Arg397 the chain carries Omega-N-methylarginine. Over residues 437 to 469 (LSKKTGSPGSPSAGGVQSTAKKSGQKTVLSNVQ) the composition is skewed to polar residues. Thr441 bears the Phosphothreonine mark. 2 positions are modified to phosphoserine: Ser443 and Ser446. The segment covering 471–480 (ELDRMTRKPD) has biased composition (basic and acidic residues). Polar residues predominate over residues 482–492 (MVTNSSTENEA).

The protein belongs to the dynein light intermediate chain family. In terms of assembly, homodimer. The cytoplasmic dynein 1 complex consists of two catalytic heavy chains (HCs) and a number of non-catalytic subunits presented by intermediate chains (ICs), light intermediate chains (LICs) and light chains (LCs); the composition seems to vary in respect to the IC, LIC and LC composition. The heavy chain homodimer serves as a scaffold for the probable homodimeric assembly of the respective non-catalytic subunits. The ICs and LICs bind directly to the HC dimer and the LCs assemble on the IC dimer. Interacts with DYNC1H1; DYNC1LI1 and DYNC1LI2 bind mutually exclusive to DYNC1H.

The protein localises to the cytoplasm. It is found in the cytoskeleton. In terms of biological role, acts as one of several non-catalytic accessory components of the cytoplasmic dynein 1 complex that are thought to be involved in linking dynein to cargos and to adapter proteins that regulate dynein function. Cytoplasmic dynein 1 acts as a motor for the intracellular retrograde motility of vesicles and organelles along microtubules. May play a role in binding dynein to membranous organelles or chromosomes. The protein is Cytoplasmic dynein 1 light intermediate chain 2 (Dync1li2) of Mus musculus (Mouse).